Consider the following 1211-residue polypeptide: MEPPQKKILKVFDQDGLYKTMVIEPSSTTGEICEKFAKKLFLEDSEVVQFSLFIFEGGVRHQLKNTDFPFDYLIKYEKKDYKFFFLNPNGEFISFDKDKQVKKSQSASTSGSAPPKKEPPKPQELQQKQHISKGKSGWLLRKRPGRYDKLYSVSKADKYLRLYENEDTDNDPLYELSLENSIIELKQDLHLQLTLGNSERYIFTHESESEIVSWAQELQATMNYTPGSSSSGSKTNIIKNSSPMGGMLMGGGGGGGGYIPSTKDLGVKLQSKAENTTTLVSTLIQWVNHILEGKGIKVEETEVLSAFSDGIVFINLIEDLFNQTISYRKGKSVYEMQSNIDKCLDVLKTKCGCDYGKILSSDVSECKVAKIIVRILWSMFVGYFCNCEGKEFNMRDKLISWCSTIVLQESSKQIIVESPSSLRNPMVFAVLVNKFAGSTTLDFNALQKIKSKQDQAQQIIEAAFNYLSIPMVVDSSFWNDDQLDEKSFLIYLSFYYIYLSGQEEEKSKFLQSCINPRPSVEPEQTISIRDKQLKLMREKKEEEDRLKKEKEEKEKEEKEKLEKESSAAAAATSSIASTANSNSTEPPKPTTVPLKKTISKLPPRKLPPTVSSPTTTTTTTVPTTVPTTVTTTTTTTSPTTSPTLTPKQPIGTTIKKPATAPLKLKPVAKPLPQPTPSSSTSTTTTPTTTPSSPKPTPVPRTPQLEKEKQDRLEKARLEKEKAEKEEQEFLKQQQEEEEEEQRLLLEQQKQQQEGQERLRKEEEEQQQQRELEEKQRQIDEEEAEEEARIRELEEEARKSKERLEKARLDKLAKAQKEREDKEREEKEKKEKEERERKERKHDENDMDTFKLLEDIVSSSSSPTITPPQSLHSSQIIRTTIEEDDQTNSELEMFQNEYNRLQDEEEHINSFLKLGSSGSNNSNNNNNNNNNKSGASSVTESVTTNKHKSIDILSDNSSVLSSLDDIINSIDKKTSATTSDSFNLSTSSTSLSFLPSSPDLSTNSTFTTNNNNDDETKARSLTSKARKPLPTLTKEQQSIIDKQTGLVSKQSTNNESNEQQQQQQQQQQLQQQQSSQNSTTSISTVNPSNLSINNEEKEKESEPHKPPPKNTQGRVVVRICLEGFGDVLFCSFAIGYDTLCGTVRDMVIKKMKVSSTEEFEYSLHIVRDGLERVLDDDEILLEAEDKIDRFVFKKNDIDRRLLISNHRPVSSK.

The 86-residue stretch at 5 to 90 (QKKILKVFDQ…YKFFFLNPNG (86 aa)) folds into the Ras-associating 1 domain. Residues 103-112 (KSQSASTSGS) show a composition bias toward polar residues. The tract at residues 103 to 133 (KSQSASTSGSAPPKKEPPKPQELQQKQHISK) is disordered. In terms of domain architecture, PH spans 132-223 (SKGKSGWLLR…WAQELQATMN (92 aa)). Calponin-homology (CH) domains follow at residues 277 to 384 (TTLV…VGYF) and 392 to 502 (FNMR…LSGQ). 2 disordered regions span residues 520–941 (VEPE…TESV) and 973–1110 (TSAT…PKNT). A coiled-coil region spans residues 527–572 (SIRDKQLKLMREKKEEEDRLKKEKEEKEKEEKEKLEKESSAAAAAT). The span at 528–565 (IRDKQLKLMREKKEEEDRLKKEKEEKEKEEKEKLEKES) shows a compositional bias: basic and acidic residues. Low complexity-rich tracts occupy residues 566–596 (SAAAAATSSIASTANSNSTEPPKPTTVPLKK), 607–646 (PPTVSSPTTTTTTTVPTTVPTTVTTTTTTTSPTTSPTLTP), 655–668 (KKPATAPLKLKPVA), and 676–691 (PSSSTSTTTTPTTTPS). Over residues 703 to 729 (QLEKEKQDRLEKARLEKEKAEKEEQEF) the composition is skewed to basic and acidic residues. Residues 703–847 (QLEKEKQDRL…ERKHDENDMD (145 aa)) adopt a coiled-coil conformation. The span at 744–753 (LLEQQKQQQE) shows a compositional bias: low complexity. Composition is skewed to basic and acidic residues over residues 754–778 (GQERLRKEEEEQQQQRELEEKQRQI) and 786–853 (EARI…KLLE). The segment covering 862–877 (PTITPPQSLHSSQIIR) has biased composition (polar residues). Residues 880–909 (IEEDDQTNSELEMFQNEYNRLQDEEEHINS) are a coiled coil. Low complexity-rich tracts occupy residues 914–936 (GSSGSNNSNNNNNNNNNKSGASS) and 976–1010 (TTSDSFNLSTSSTSLSFLPSSPDLSTNSTFTTNNN). Residues 1032-1048 (TKEQQSIIDKQTGLVSK) show a composition bias toward polar residues. A coiled-coil region spans residues 1048–1076 (KQSTNNESNEQQQQQQQQQQLQQQQSSQN). Positions 1049–1083 (QSTNNESNEQQQQQQQQQQLQQQQSSQNSTTSIST) are enriched in low complexity. The segment covering 1093–1104 (NEEKEKESEPHK) has biased composition (basic and acidic residues). The 85-residue stretch at 1112–1196 (GRVVVRICLE…DRFVFKKNDI (85 aa)) folds into the Ras-associating 2 domain.

This chain is PH domain-containing protein DDB_G0287875, found in Dictyostelium discoideum (Social amoeba).